The primary structure comprises 658 residues: MIKSQKEYLERIAYLNTLSHHYYNLDESIVSDAVYDELYQELKAYEEKNPNDIQANSPTQKVGATATNSFNKNPHLMRMWSLDDVFNQSELQAWLQRILKTYPSASFVCSPKLDGVSLNLLYQHGKLVSATTRGNGLEGELVTNNAKHIANIPHFIAYDGEIEIRGEVIISKEDFDALNKERLNANEPLFANPRNAASGSLRQLDSEITKKRKLQFIPWGVGKHSLNFLSFKECLDFIVSLGFSAIQYLNLNKNHQEIEENYHTLIREREGFFALLDGMVIVVNELNIQKELGYTQKSPKFACAYKFPALEKHTKIVGVINQVGRSGAITPVALLEPVEIAGAMINRATLHNYSEIEKKNIMLNDKVVVIRSGDVIPKIIKPLETYRDGSQQKIMRPKVCPICSHELLCEEIFTYCQNLNCPARLKESLIHFASKDALNIQGLGDKVIEQLFEEKLIVNALDLYALKLEDLMRLDKFKIKKAQNLLDAIQKSKNPPLWRLINALGIEHIGKGASKTLAKYGLNVLEKSEAEFLEMEGFGVEMVRSLVNFYASNQEFIRSLFELLNPKNSDMAEEKQESSSVFNNKTIVLTGTLSKPRQEYAQMLENLGAKITSSVSAKTDFLIVGENAGSKLALAKKHGVSVLNEEELLKRLKKLDQN.

Residues 32–36 (DAVYD) and 81–82 (SL) contribute to the NAD(+) site. The active-site N6-AMP-lysine intermediate is the K112. R133, E167, and K306 together coordinate NAD(+). Zn(2+) contacts are provided by C400, C403, C416, and C421. A BRCT domain is found at 577–658 (ESSSVFNNKT…LKRLKKLDQN (82 aa)).

It belongs to the NAD-dependent DNA ligase family. LigA subfamily. It depends on Mg(2+) as a cofactor. Mn(2+) serves as cofactor.

The catalysed reaction is NAD(+) + (deoxyribonucleotide)n-3'-hydroxyl + 5'-phospho-(deoxyribonucleotide)m = (deoxyribonucleotide)n+m + AMP + beta-nicotinamide D-nucleotide.. Its function is as follows. DNA ligase that catalyzes the formation of phosphodiester linkages between 5'-phosphoryl and 3'-hydroxyl groups in double-stranded DNA using NAD as a coenzyme and as the energy source for the reaction. It is essential for DNA replication and repair of damaged DNA. The sequence is that of DNA ligase from Helicobacter pylori (strain G27).